We begin with the raw amino-acid sequence, 938 residues long: Myocardin (938 aa).

The short motif at 12–27 is the MEF2C-binding element; it reads IRSKFRSVLQLRLQQR. An RPEL 1 repeat occupies 18 to 43; the sequence is SVLQLRLQQRRTQEQLANQGIIPPLK. Positions 48–61 are enriched in basic and acidic residues; the sequence is FHEQRKHLDSDKAK. The disordered stretch occupies residues 48–68; that stretch reads FHEQRKHLDSDKAKNSLKRKA. RPEL repeat units follow at residues 62–87 and 106–131; these read NSLK…QAST and DDLN…PVDS. The tract at residues 153–205 is HDAC5-binding; it reads FEEDSSSDGLSPDQTRSEDPQNSAGSPPDAKASDTPSTGSLGTNQDLASGSEN. The interval 154 to 281 is disordered; sequence EEDSSSDGLS…DQKAEKSPPP (128 aa). 3 stretches are compositionally biased toward polar residues: residues 159-177, 186-203, and 210-220; these read SDGL…NSAG, DTPS…ASGS, and SASQPSHQSDA. The span at 248–265 shows a compositional bias: basic residues; the sequence is NRHKKPKDPKPKVKKLKY. Residues 371 to 405 enclose the SAP domain; it reads LDDLKVSELRQQLRIRGLPVSGTKTALMDRLRPFQ. 4 positions are modified to phosphoserine; by GSK3-beta: Ser451, Ser455, Ser459, and Ser463. Positions 516–561 form a coiled coil; that stretch reads EKDKMLVEKQKVINELTWKLQQEQRQVEELRMQLQKQKRNNCSEKK. 4 positions are modified to phosphoserine; by GSK3-beta: Ser626, Ser630, Ser634, and Ser638. Disordered regions lie at residues 635-678 and 693-734; these read PQHS…SSPI and SDKV…MTRS. Residues 699 to 715 are compositionally biased toward low complexity; it reads KFSIPSPTFSKSSSAIS. The required for interaction with and ubiquitination by STUB1 stretch occupies residues 717–938; that stretch reads VTQPPSYEDA…SSMDLHLQQW (222 aa). Ser815, Ser862, and Ser869 each carry phosphoserine; by MAPK1 and MAPK3. At Thr896 the chain carries Phosphothreonine; by MAPK1 and MAPK3.

Homodimer. Interacts with SRF, its association does not depend on specific DNA sequences for ternary complex formation. Interacts with MLLT7/FOXO4. Interacts (via C-terminal) with EP300 (via the CREB-binding domain). Interacts with HDAC4 and HDAC5. Interacts with MEF2C. Interacts (via C-terminus) with STUB1/CHIP. Interacts with PURB. In terms of processing, ubiquitinated; by STUB1/CHIP at the C-terminus, leading to its degradation by the proteasome. Phosphorylation by GSK3B is required for STUB1/CHIP-mediated ubiquitination. Post-translationally, phosphorylation negatively regulates the intrinsic myocardin transcriptional activity. Phosphorylated; by GSK3B. In terms of tissue distribution, expressed in the heart, aorta and bladder. Expressed in smooth muscle cell-containing tissues: stomach, small intestine, colon, lung, placenta and uterus. Very faint expression in prostate and skeletal muscle.

Its subcellular location is the nucleus. Its function is as follows. Smooth muscle cells (SM) and cardiac muscle cells-specific transcriptional factor which uses the canonical single or multiple CArG boxes DNA sequence. Acts as a cofactor of serum response factor (SRF) with the potential to modulate SRF-target genes. Plays a crucial role in cardiogenesis, urinary bladder development, and differentiation of the smooth muscle cell lineage (myogenesis). Positively regulates the transcription of genes involved in vascular smooth muscle contraction. The protein is Myocardin (MYOCD) of Homo sapiens (Human).